Reading from the N-terminus, the 899-residue chain is Alanine--tRNA ligase (899 aa).

Zn(2+)-binding residues include His-595, His-599, Cys-703, and His-707.

Belongs to the class-II aminoacyl-tRNA synthetase family. Zn(2+) is required as a cofactor.

The protein resides in the cytoplasm. The catalysed reaction is tRNA(Ala) + L-alanine + ATP = L-alanyl-tRNA(Ala) + AMP + diphosphate. Catalyzes the attachment of alanine to tRNA(Ala) in a two-step reaction: alanine is first activated by ATP to form Ala-AMP and then transferred to the acceptor end of tRNA(Ala). Also edits incorrectly charged Ser-tRNA(Ala) and Gly-tRNA(Ala) via its editing domain. This chain is Alanine--tRNA ligase, found in Caldivirga maquilingensis (strain ATCC 700844 / DSM 13496 / JCM 10307 / IC-167).